Reading from the N-terminus, the 325-residue chain is Elongation factor P--(R)-beta-lysine ligase (325 aa).

76–78 (SPE) contacts substrate. Residues 100 to 102 (RNE) and asparagine 109 contribute to the ATP site. Substrate is bound at residue tyrosine 118. Residue 244–245 (EL) participates in ATP binding. A substrate-binding site is contributed by glutamate 251. Residue glycine 300 coordinates ATP.

Belongs to the class-II aminoacyl-tRNA synthetase family. EpmA subfamily. As to quaternary structure, homodimer.

The enzyme catalyses D-beta-lysine + L-lysyl-[protein] + ATP = N(6)-((3R)-3,6-diaminohexanoyl)-L-lysyl-[protein] + AMP + diphosphate + H(+). With EpmB is involved in the beta-lysylation step of the post-translational modification of translation elongation factor P (EF-P). Catalyzes the ATP-dependent activation of (R)-beta-lysine produced by EpmB, forming a lysyl-adenylate, from which the beta-lysyl moiety is then transferred to the epsilon-amino group of a conserved specific lysine residue in EF-P. This is Elongation factor P--(R)-beta-lysine ligase from Erwinia tasmaniensis (strain DSM 17950 / CFBP 7177 / CIP 109463 / NCPPB 4357 / Et1/99).